Here is a 605-residue protein sequence, read N- to C-terminus: Capsid scaffolding protein (605 aa).

Residues His-48, Ser-116, and His-139 each act as charge relay system in the active site. Residues 235–275 (ASDAPDLQKPDKALQSPPPASTDPDTMLSGNAGEGATACGG) are disordered. An interaction with pAP region spans residues 281 to 300 (QDLISVPRNTFMTLLQTNLD). Disordered stretches follow at residues 403-432 (DYVP…PGED) and 489-588 (PHQS…KSVS). The Nuclear localization signal signature appears at 410–416 (RSNKRKR). Positions 568–579 (ASASGVAQSKEP) are enriched in polar residues. Positions 585–605 (KSVSAHLKSIFCEELLNKRVA) are interaction with major capsid protein.

This sequence belongs to the herpesviridae capsid scaffolding protein family. Homomultimer. Interacts with major capsid protein. As to quaternary structure, exists in a monomer-dimer equilibrium with the dimer being the active species. In terms of processing, capsid scaffolding protein is cleaved by assemblin after formation of the spherical procapsid. As a result, the capsid obtains its mature, icosahedral shape. Cleavages occur at two or more sites: release (R-site) and maturation (M-site).

The protein resides in the host cytoplasm. Its subcellular location is the host nucleus. The catalysed reaction is Cleaves -Ala-|-Ser- and -Ala-|-Ala- bonds in the scaffold protein.. Acts as a scaffold protein by binding major capsid protein in the cytoplasm, inducing the nuclear localization of both proteins. Multimerizes in the nucleus such as major capsid protein forms the icosahedral T=16 capsid. Autocatalytic cleavage releases the assembly protein, and subsequently abolishes interaction with major capsid protein. Cleavages products are evicted from the capsid before or during DNA packaging. In terms of biological role, protease that plays an essential role in virion assembly within the nucleus. Catalyzes the cleavage of the assembly protein after formation of the spherical procapsid. By that cleavage, the capsid matures and gains its icosahedral shape. The cleavage sites seem to include -Ala-Ser-, -Ala-Ala-, as well as Ala-Thr bonds. Assemblin and cleavages products are evicted from the capsid before or during DNA packaging. Functionally, plays a major role in capsid assembly. Acts as a scaffold protein by binding major capsid protein. Multimerizes in the nucleus such as major capsid protein forms the icosahedral T=16 capsid. Cleaved by assemblin after capsid completion. The cleavages products are evicted from the capsid before or during DNA packaging. The protein is Capsid scaffolding protein of Epstein-Barr virus (strain AG876) (HHV-4).